The chain runs to 271 residues: Gap junction beta-5 protein (271 aa).

The Cytoplasmic portion of the chain corresponds to 1–20 (MNWSVFEGLLSGVNKYSTAF). A helical membrane pass occupies residues 21–40 (GRIWLSLVFVFRVLVYLVTA). Topologically, residues 41–75 (ERVWGDDQKDFDCNTRQPGCTNVCYDEFFPVSHVR) are extracellular. A helical membrane pass occupies residues 76 to 98 (LWALQLILVTCPSLLVVMHVAYR). At 99–124 (KAREKKYQQEVGKGYLYPNPGKKRGG) the chain is on the cytoplasmic side. Residues 125–147 (LWWTYVCSLLFKATIDIIFLYLF) form a helical membrane-spanning segment. At 148–182 (HAFYPRYTLPSMVKCHSAPCPNTVDCFIAKPSEKN) the chain is on the extracellular side. The helical transmembrane segment at 183–205 (IFIVFMLVTAIVCILLNLVELLY) threads the bilayer. Residues 206–271 (LVIKRCSECA…PRAHVKKTIL (66 aa)) lie on the Cytoplasmic side of the membrane. The disordered stretch occupies residues 217–237 (AKRPPTAHAKNDPNWANPSSK).

It belongs to the connexin family. Beta-type (group I) subfamily. In terms of assembly, a connexon is composed of a hexamer of connexins. As to expression, expressed in skin.

It is found in the cell membrane. Its subcellular location is the cell junction. The protein localises to the gap junction. One gap junction consists of a cluster of closely packed pairs of transmembrane channels, the connexons, through which materials of low MW diffuse from one cell to a neighboring cell. This chain is Gap junction beta-5 protein (Gjb5), found in Rattus norvegicus (Rat).